A 445-amino-acid polypeptide reads, in one-letter code: MTTQATPLTPVISRHWDDPESWTLATYQRHDRYRGYQALQKALTMPPDDVISIVKDSGLRGRGGAGFATGTKWSFIPQGDTGAAAKPHYLVVNADESEPGTCKDIPLMLATPHVLIEGVIIAAYAIRAHHAFVYVRGEVVPVLRRLHNAVAEAYAAGFLGRNIGGSGFDLELVVHAGAGAYICGEETALLDSLEGRRGQPRLRPPFPAVAGLYGCPTVINNVETIASVPSIILGGIDWFRSMGSEKSPGFTLYSLSGHVTRPGQYEAPLGITLRELLDYAGGVRAGHRLKFWTPGGSSTPLLTDEHLDVPLDYEGVGAAGSMLGTKALEIFDETTCVVRAVRRWTEFYKHESCGKCTPCREGTFWLDKIYERLETGRGSHEDIDKLLDISDSILGKSFCALGDGAASPVMSSIKHFRDEYLAHVEGGGCPFDPRDSMLVANGVDA.

Residue 61–70 (GRGGAGFATG) coordinates NAD(+). 177–224 (GAGAYICGEETALLDSLEGRRGQPRLRPPFPAVAGLYGCPTVINNVET) is an FMN binding site. 4 residues coordinate [4Fe-4S] cluster: C353, C356, C359, and C399.

The protein belongs to the complex I 51 kDa subunit family. Requires FMN as cofactor. It depends on [4Fe-4S] cluster as a cofactor.

The catalysed reaction is a quinone + NADH + 5 H(+)(in) = a quinol + NAD(+) + 4 H(+)(out). In terms of biological role, NDH-1 shuttles electrons from NADH, via FMN and iron-sulfur (Fe-S) centers, to quinones in the respiratory chain. The immediate electron acceptor for the enzyme in this species is believed to be menaquinone. Couples the redox reaction to proton translocation (for every two electrons transferred, four hydrogen ions are translocated across the cytoplasmic membrane), and thus conserves the redox energy in a proton gradient. The polypeptide is NADH-quinone oxidoreductase subunit F (nuoF) (Mycobacterium bovis (strain ATCC BAA-935 / AF2122/97)).